Here is a 441-residue protein sequence, read N- to C-terminus: GTPase Der (441 aa).

EngA-type G domains follow at residues 2–164 and 173–343; these read QKVA…PADE and IRIS…EKWQ. Residues 8–15, 55–59, 116–119, 179–186, 226–230, and 288–291 contribute to the GTP site; these read GRPNVGKS, DTGGL, NKID, DTAGI, and NKWD. Residues 344–428 form the KH-like domain; it reads SRIPTAELNR…PVRLKWKEKG (85 aa).

It belongs to the TRAFAC class TrmE-Era-EngA-EngB-Septin-like GTPase superfamily. EngA (Der) GTPase family. In terms of assembly, associates with the 50S ribosomal subunit.

Functionally, GTPase that plays an essential role in the late steps of ribosome biogenesis. This chain is GTPase Der, found in Deinococcus geothermalis (strain DSM 11300 / CIP 105573 / AG-3a).